The primary structure comprises 333 residues: Transaldolase (333 aa).

The active-site Schiff-base intermediate with substrate is the K136.

It belongs to the transaldolase family. Type 1 subfamily. Homodimer.

Its subcellular location is the cytoplasm. The enzyme catalyses D-sedoheptulose 7-phosphate + D-glyceraldehyde 3-phosphate = D-erythrose 4-phosphate + beta-D-fructose 6-phosphate. It participates in carbohydrate degradation; pentose phosphate pathway; D-glyceraldehyde 3-phosphate and beta-D-fructose 6-phosphate from D-ribose 5-phosphate and D-xylulose 5-phosphate (non-oxidative stage): step 2/3. Its function is as follows. Transaldolase is important for the balance of metabolites in the pentose-phosphate pathway. In Acidobacterium capsulatum (strain ATCC 51196 / DSM 11244 / BCRC 80197 / JCM 7670 / NBRC 15755 / NCIMB 13165 / 161), this protein is Transaldolase.